Reading from the N-terminus, the 373-residue chain is NAD(P)H-quinone oxidoreductase subunit 1 (373 aa).

Transmembrane regions (helical) follow at residues Leu28–Val48, Leu98–Ile118, Val129–Met149, Ala167–Met187, Ile205–Leu225, Val267–Val287, Ser309–Leu329, and Phe348–Pro368.

This sequence belongs to the complex I subunit 1 family. NDH-1 is composed of at least 11 different subunits.

The protein localises to the cellular thylakoid membrane. It catalyses the reaction a plastoquinone + NADH + (n+1) H(+)(in) = a plastoquinol + NAD(+) + n H(+)(out). The catalysed reaction is a plastoquinone + NADPH + (n+1) H(+)(in) = a plastoquinol + NADP(+) + n H(+)(out). In terms of biological role, NDH-1 shuttles electrons from an unknown electron donor, via FMN and iron-sulfur (Fe-S) centers, to quinones in the respiratory and/or the photosynthetic chain. The immediate electron acceptor for the enzyme in this species is believed to be plastoquinone. Couples the redox reaction to proton translocation, and thus conserves the redox energy in a proton gradient. The protein is NAD(P)H-quinone oxidoreductase subunit 1 of Parasynechococcus marenigrum (strain WH8102).